Here is a 91-residue protein sequence, read N- to C-terminus: Small ribosomal subunit protein bS20 (91 aa).

The span at 1 to 18 shows a compositional bias: basic and acidic residues; it reads MPLHKSAEKRLRQSERRN. The segment at 1 to 25 is disordered; it reads MPLHKSAEKRLRQSERRNARNRARK.

It belongs to the bacterial ribosomal protein bS20 family.

In terms of biological role, binds directly to 16S ribosomal RNA. This Chlorobium luteolum (strain DSM 273 / BCRC 81028 / 2530) (Pelodictyon luteolum) protein is Small ribosomal subunit protein bS20.